Reading from the N-terminus, the 369-residue chain is DNA replication and repair protein RecF (369 aa).

30–37 (GDNGSGKT) provides a ligand contact to ATP.

It belongs to the RecF family.

Its subcellular location is the cytoplasm. Its function is as follows. The RecF protein is involved in DNA metabolism; it is required for DNA replication and normal SOS inducibility. RecF binds preferentially to single-stranded, linear DNA. It also seems to bind ATP. The protein is DNA replication and repair protein RecF of Pseudomonas paraeruginosa (strain DSM 24068 / PA7) (Pseudomonas aeruginosa (strain PA7)).